Reading from the N-terminus, the 424-residue chain is MASSNLIKQLQERGLVAQVTDEEALAERLAQGPIALYCGFDPTADSLHLGHLVPLLCLKRFQQAGHKPVALVGGATGLIGDPSFKAAERKLNTEETVQEWVDKIRKQVAPFLDFDCGENSAIAANNYDWFGNMNVLTFLRDIGKHFSVNQMINKEAVKQRLNREDQGISFTEFSYNLLQGYDFACLNKLYGVSLQIGGSDQWGNITSGIDLTRRLHQNQVFGLTVPLITKADGTKFGKTEGGAVWLDPKKTSPYKFYQFWINTADADVYRFLKFFTFMSIEEINALEEEDKNSGKAPRAQYVLAEQVTRLVHGEEGLQAAKRITECLFSGSLSALSEADFEQLAQDGVPMVEMEKGADLMQALVDSELQPSRGQARKTIASNAVTINGEKQSDPEYFFKEEDRLFGRFTLLRRGKKNYCLICWK.

Tyrosine 37 provides a ligand contact to L-tyrosine. A 'HIGH' region motif is present at residues 42-51; sequence PTADSLHLGH. An N6-acetyllysine modification is found at lysine 144. Residues tyrosine 175 and glutamine 179 each coordinate L-tyrosine. Positions 235-239 match the 'KMSKS' region motif; that stretch reads KFGKT. Lysine 238 provides a ligand contact to ATP. An S4 RNA-binding domain is found at 357–414; that stretch reads ADLMQALVDSELQPSRGQARKTIASNAVTINGEKQSDPEYFFKEEDRLFGRFTLLRRG.

The protein belongs to the class-I aminoacyl-tRNA synthetase family. TyrS type 1 subfamily. In terms of assembly, homodimer.

The protein resides in the cytoplasm. The catalysed reaction is tRNA(Tyr) + L-tyrosine + ATP = L-tyrosyl-tRNA(Tyr) + AMP + diphosphate + H(+). In terms of biological role, catalyzes the attachment of tyrosine to tRNA(Tyr) in a two-step reaction: tyrosine is first activated by ATP to form Tyr-AMP and then transferred to the acceptor end of tRNA(Tyr). The polypeptide is Tyrosine--tRNA ligase (Escherichia fergusonii (strain ATCC 35469 / DSM 13698 / CCUG 18766 / IAM 14443 / JCM 21226 / LMG 7866 / NBRC 102419 / NCTC 12128 / CDC 0568-73)).